The sequence spans 570 residues: Probable metalloreductase AIM14 (570 aa).

The Extracellular segment spans residues 1–20; the sequence is MKESPLITLVKRHSETHFAN. Residues 21-41 form a helical membrane-spanning segment; it reads IKYGYYVLIISLVYLIGLALL. The Cytoplasmic portion of the chain corresponds to 42–69; it reads RAFGRRTPSRSSSAFKNKIIYRLYDIDP. A helical transmembrane segment spans residues 70 to 90; the sequence is AIHLGILFFAVLIPFYYHYSL. The Extracellular segment spans residues 91-141; it reads TTQSTVYLKRLGRLSYALIPLNLFLTLRPNWFLRKNCTYTDFIPFHKWFSR. In terms of domain architecture, Ferric oxidoreductase spans 101–219; sequence LGRLSYALIP…NLVNVAFILL (119 aa). The helical transmembrane segment at 142-162 threads the bilayer; the sequence is IITVIGLLHGIFFIIKWAIDD. The Cytoplasmic segment spans residues 163–176; the sequence is NVSLKQKLILKTFN. Residues 177-197 form a helical membrane-spanning segment; that stretch reads FAGFIISILVLFLLICSIGPM. At 198 to 373 the chain is on the extracellular side; that stretch reads RRYNYRLFYI…PEECYSQGTN (176 aa). Positions 250–388 constitute an FAD-binding FR-type domain; the sequence is FAKSLMILNK…GGSGISFALP (139 aa). The helical transmembrane segment at 374–394 threads the bilayer; that stretch reads IAIICGGSGISFALPLFRHFF. At 395–570 the chain is on the cytoplasmic side; that stretch reads NKENVKYLKM…INFVCETYGL (176 aa). A compositionally biased stretch (polar residues) spans 480-505; it reads ISNFNSENADSNDNTPETSHSPTKEN. A disordered region spans residues 480-509; that stretch reads ISNFNSENADSNDNTPETSHSPTKENGSMI.

This sequence belongs to the ferric reductase (FRE) family. AIM14 subfamily. In terms of assembly, interacts with ribosomes.

Its subcellular location is the membrane. In terms of biological role, probable cell surface metalloreductase. May be involved in iron or copper homeostasis. This is Probable metalloreductase AIM14 (AIM14) from Saccharomyces cerevisiae (strain ATCC 204508 / S288c) (Baker's yeast).